Reading from the N-terminus, the 117-residue chain is UPF0122 protein Teth514_1714 (117 aa).

This sequence belongs to the UPF0122 family.

In terms of biological role, might take part in the signal recognition particle (SRP) pathway. This is inferred from the conservation of its genetic proximity to ftsY/ffh. May be a regulatory protein. The protein is UPF0122 protein Teth514_1714 of Thermoanaerobacter sp. (strain X514).